The chain runs to 605 residues: Isocitrate dehydrogenase kinase/phosphatase (605 aa).

Residues Ala-327–Leu-333 and Lys-348 each bind ATP. The active site involves Asp-383.

The protein belongs to the AceK family.

The protein localises to the cytoplasm. It carries out the reaction L-seryl-[isocitrate dehydrogenase] + ATP = O-phospho-L-seryl-[isocitrate dehydrogenase] + ADP + H(+). In terms of biological role, bifunctional enzyme which can phosphorylate or dephosphorylate isocitrate dehydrogenase (IDH) on a specific serine residue. This is a regulatory mechanism which enables bacteria to bypass the Krebs cycle via the glyoxylate shunt in response to the source of carbon. When bacteria are grown on glucose, IDH is fully active and unphosphorylated, but when grown on acetate or ethanol, the activity of IDH declines drastically concomitant with its phosphorylation. The chain is Isocitrate dehydrogenase kinase/phosphatase from Burkholderia multivorans (strain ATCC 17616 / 249).